Consider the following 250-residue polypeptide: Small ribosomal subunit protein uS3 (250 aa).

Positions 39–107 (VREFLTKKLK…PAQVSINEID (69 aa)) constitute a KH type-2 domain. The segment at 214-250 (VMNPAPQEERPAKRGRGRGEGQERRGRRSDRAADKGE) is disordered. Positions 220-250 (QEERPAKRGRGRGEGQERRGRRSDRAADKGE) are enriched in basic and acidic residues.

The protein belongs to the universal ribosomal protein uS3 family. Part of the 30S ribosomal subunit. Forms a tight complex with proteins S10 and S14.

In terms of biological role, binds the lower part of the 30S subunit head. Binds mRNA in the 70S ribosome, positioning it for translation. The sequence is that of Small ribosomal subunit protein uS3 from Acinetobacter baylyi (strain ATCC 33305 / BD413 / ADP1).